Consider the following 275-residue polypeptide: Transcription regulator AOL_s00215g275 (275 aa).

2 disordered regions span residues 13–65 (TPLP…SSIG) and 84–108 (ILQQ…RQRL). The span at 14-26 (PLPSLNSSRSPQR) shows a compositional bias: polar residues. A compositionally biased stretch (low complexity) spans 27–40 (TPSLGSSSTSSLSP). A compositionally biased stretch (polar residues) spans 47-60 (TPSTPESNDSGLTL). Over residues 88-106 (KSRHQNQPSRRHKQKNRRQ) the composition is skewed to basic residues.

Its function is as follows. Regulatory protein; part of the gene cluster that mediates the biosynthesis of sesquiterpenyl epoxy-cyclohexenoids (SECs) such as anthrobotrisins and arthrosporols, metabolites that possess a novel hybrid carbon skeleton consisting of a polyketide-derived epoxycyclohexenol combined with a terpenoid-derived monocyclic sesquiterpenol substructure (PKS-PTS hybrid). The SEC pathway plays an important role for fungal soil colonization via decreasing fungal nematode-capturing ability. AOL_s00215g275 can perform multiple functions in fungal growth and development via regulating the SEC biosynthesis, TCA cycle, and septa formation. Also involved in inhibiting conidial formation, germination, and nematicidal activity but promotes trap production. Plays a role in fungal resistances and significantly regulates the fungal morphology and responses to chemical stressors such as cell-wall-perturbing agents (SDS and Congo red), osmotic agents (NaCl and sorbitol), or the oxidant H(2)O(2). In Arthrobotrys oligospora (strain ATCC 24927 / CBS 115.81 / DSM 1491) (Nematode-trapping fungus), this protein is Transcription regulator AOL_s00215g275.